Consider the following 294-residue polypeptide: Tetraspanin-15 (294 aa).

Residues 1–23 lie on the Cytoplasmic side of the membrane; that stretch reads MPRGDSEQVRYCARFSYLWLKFS. Residues 24–44 traverse the membrane as a helical segment; that stretch reads LIIYSTVFWLIGALVLSVGIY. Residues 45-62 are Extracellular-facing; that stretch reads AEVERQKYKTLESAFLAP. A helical membrane pass occupies residues 63–83; it reads AIILILLGVVMFMVSFIGVLA. Residues 84-93 lie on the Cytoplasmic side of the membrane; the sequence is SLRDNLYLLQ. The chain crosses the membrane as a helical span at residues 94–114; that stretch reads AFMYILGICLIMELIGGVVAL. At 115 to 235 the chain is on the extracellular side; it reads TFRNQTIDFL…WFMDNYTIMA (121 aa). N-linked (GlcNAc...) asparagine glycosylation is present at Asn118. 4 disulfide bridges follow: Cys154/Cys219, Cys155/Cys185, Cys171/Cys179, and Cys186/Cys198. Asn189 and Asn230 each carry an N-linked (GlcNAc...) asparagine glycan. Residues 236–256 form a helical membrane-spanning segment; the sequence is GILLGILLPQFLGVLLTLLYI. Residues 257–294 lie on the Cytoplasmic side of the membrane; it reads TRVEDIIMEHSVTDGLLGPGAKPSVEAAGTGCCLCYPN.

It belongs to the tetraspanin (TM4SF) family. As to quaternary structure, interacts with ADAM10; the interaction influences ADAM10 substrate specificity, endocytosis and turnover. In terms of processing, palmitoylated.

The protein resides in the cell membrane. Its subcellular location is the late endosome membrane. Functionally, part of TspanC8 subgroup, composed of 6 members that interact with the transmembrane metalloprotease ADAM10. This interaction is required for ADAM10 exit from the endoplasmic reticulum and for enzymatic maturation and trafficking to the cell surface as well as substrate specificity. Different TspanC8/ADAM10 complexes have distinct substrates. Promotes ADAM10-mediated cleavage of CDH2. Negatively regulates ligand-induced Notch activity probably by regulating ADAM10 activity. The sequence is that of Tetraspanin-15 from Homo sapiens (Human).